Reading from the N-terminus, the 541-residue chain is Transcription termination factor MTERF4, chloroplastic (541 aa).

The transit peptide at 1-45 directs the protein to the chloroplast; that stretch reads MKIRFCNGFTKPGFLLVHFEPPSFFAVRSRSLSDSTYGNLCNHKK. Disordered regions lie at residues 66–103 and 503–541; these read SRSLDSPRRERSSRSSSSSGRDRDRDKDKGRDSKSLYS and EVETDPSSFDMNTLMQPEREEESDSEYEEEEDDDDEEFA. Positions 85–99 are enriched in basic and acidic residues; the sequence is GRDRDRDKDKGRDSK. Positions 507–517 are enriched in polar residues; the sequence is DPSSFDMNTLM. Positions 521 to 541 are enriched in acidic residues; it reads REEESDSEYEEEEDDDDEEFA.

The protein belongs to the mTERF family.

It localises to the plastid. Its subcellular location is the chloroplast. The protein localises to the mitochondrion. Transcription termination factor required for processing and steady-state levels of plastid transcripts. Required for splicing of the chloroplastic Clp protease (ClpP) group IIa intron. Required for maturation of 16S rRNA and 23S rRNA in the chloroplast. Essential for embryogenesis. Required for the maintenance of the correct levels of transcripts in the mitochondria and chloroplasts. This is Transcription termination factor MTERF4, chloroplastic from Arabidopsis thaliana (Mouse-ear cress).